Reading from the N-terminus, the 126-residue chain is Large ribosomal subunit protein eL18 (126 aa).

It belongs to the eukaryotic ribosomal protein eL18 family.

In Methanosarcina acetivorans (strain ATCC 35395 / DSM 2834 / JCM 12185 / C2A), this protein is Large ribosomal subunit protein eL18.